Consider the following 370-residue polypeptide: DNA replication and repair protein RecF (370 aa).

Position 30-37 (30-37 (GQNGMGKT)) interacts with ATP.

This sequence belongs to the RecF family.

It localises to the cytoplasm. Functionally, the RecF protein is involved in DNA metabolism; it is required for DNA replication and normal SOS inducibility. RecF binds preferentially to single-stranded, linear DNA. It also seems to bind ATP. The sequence is that of DNA replication and repair protein RecF from Bacteroides fragilis (strain YCH46).